The chain runs to 901 residues: Protein translocase subunit SecA (901 aa).

Residues Gln-87, 105–109 (GEGKT), and Asp-512 each bind ATP. Positions 855–891 (QQLSHQDDETAAAAALAEQTGERKVGRNDPCPCGSGK) are disordered. 4 residues coordinate Zn(2+): Cys-885, Cys-887, Cys-896, and His-897.

It belongs to the SecA family. Monomer and homodimer. Part of the essential Sec protein translocation apparatus which comprises SecA, SecYEG and auxiliary proteins SecDF-YajC and YidC. Zn(2+) is required as a cofactor.

The protein localises to the cell inner membrane. It is found in the cytoplasm. It carries out the reaction ATP + H2O + cellular proteinSide 1 = ADP + phosphate + cellular proteinSide 2.. Its function is as follows. Part of the Sec protein translocase complex. Interacts with the SecYEG preprotein conducting channel. Has a central role in coupling the hydrolysis of ATP to the transfer of proteins into and across the cell membrane, serving both as a receptor for the preprotein-SecB complex and as an ATP-driven molecular motor driving the stepwise translocation of polypeptide chains across the membrane. This Cronobacter sakazakii (strain ATCC BAA-894) (Enterobacter sakazakii) protein is Protein translocase subunit SecA.